The following is a 346-amino-acid chain: Actin-like protein 10 (346 aa).

Belongs to the actin family.

The protein is Actin-like protein 10 (Actl10) of Mus musculus (Mouse).